Consider the following 329-residue polypeptide: 4-hydroxythreonine-4-phosphate dehydrogenase (329 aa).

Residues H136 and T137 each contribute to the substrate site. A divalent metal cation contacts are provided by H166, H211, and H266. Residues K274, N283, and R292 each contribute to the substrate site.

It belongs to the PdxA family. Homodimer. Zn(2+) is required as a cofactor. Requires Mg(2+) as cofactor. The cofactor is Co(2+).

The protein localises to the cytoplasm. It carries out the reaction 4-(phosphooxy)-L-threonine + NAD(+) = 3-amino-2-oxopropyl phosphate + CO2 + NADH. It participates in cofactor biosynthesis; pyridoxine 5'-phosphate biosynthesis; pyridoxine 5'-phosphate from D-erythrose 4-phosphate: step 4/5. Functionally, catalyzes the NAD(P)-dependent oxidation of 4-(phosphooxy)-L-threonine (HTP) into 2-amino-3-oxo-4-(phosphooxy)butyric acid which spontaneously decarboxylates to form 3-amino-2-oxopropyl phosphate (AHAP). The chain is 4-hydroxythreonine-4-phosphate dehydrogenase from Shigella flexneri serotype 5b (strain 8401).